The chain runs to 670 residues: MDFPGHFEQIFQQLNYQRLHGQLCDCVIVVGNRHFKAHRSVLAACSTHFRALFSVAEGDQTMNMIQLDSEVVTAEAFAALIDMMYTSTLMLGESNVMDVLLAASHLHLNSVVKACKHYLTTRTLPMSPSSERAQEQSARMQRSFMLQQLGLSIVSSALSSSQSAEEPTAPMSSSMRSSLDQRTPFPMRRLHKRKQSVEERARQRLRSSMEESAISDVTPESGPAGVHSREEFFSPDSLKIVDNPKPDGMADNQEDGAMMFDRPFGAQEDAQVPSQSDGSAGNMASRATQVETSFEQEAVAEKGSFQCENPEVGLGEKEHMRVVVKSEPLSSPEPQDEVSDVTSQAEGSESVEVEGVVVSAEKIDLSPESSDRSFSDPQSSTDRVGDIHILEVTNNLEHKTSFSISNFLNKSRGSNFSASQSTDDNLPNTTSDCRLEGEAPYLLSPEAGPAGGPSSAPGSHVENPFSEPADSHFVRPMQEVMGLPCVQTSGYQGEQFGMDFSRSGLGLHSSFSRAMMGSPRGGASNFPYYRRIAPKMPVVTSVRSSQISENSASSQLMMNGATSFENGHTSQPGPPQLTRASADVLSKCKKALSEHNVLVVEGARKYACKICCKTFLTLTDCKKHIRVHTGEKPYACLKCGKRFSQSSHLYKHSKTTCLRWQSSNLPSTLL.

The 70-residue stretch at 24 to 93 (CDCVIVVGNR…MYTSTLMLGE (70 aa)) folds into the BTB domain. 2 disordered regions span residues 158 to 256 (LSSS…QEDG) and 268 to 382 (EDAQ…SSTD). Over residues 170–181 (PMSSSMRSSLDQ) the composition is skewed to polar residues. The residue at position 234 (Ser-234) is a Phosphoserine. A Glycyl lysine isopeptide (Lys-Gly) (interchain with G-Cter in SUMO2) cross-link involves residue Lys-239. A compositionally biased stretch (polar residues) spans 285-295 (SRATQVETSFE). Residues Lys-317 and Lys-325 each participate in a glycyl lysine isopeptide (Lys-Gly) (interchain with G-Cter in SUMO2) cross-link. The span at 345–360 (AEGSESVEVEGVVVSA) shows a compositional bias: low complexity. A compositionally biased stretch (basic and acidic residues) spans 361 to 374 (EKIDLSPESSDRSF). Ser-366 is subject to Phosphoserine. Glycyl lysine isopeptide (Lys-Gly) (interchain with G-Cter in SUMO2) cross-links involve residues Lys-399 and Lys-410. The span at 414–432 (SNFSASQSTDDNLPNTTSD) shows a compositional bias: polar residues. 2 disordered regions span residues 414 to 433 (SNFSASQSTDDNLPNTTSDC) and 442 to 470 (LLSPEAGPAGGPSSAPGSHVENPFSEPAD). Residues 444 to 459 (SPEAGPAGGPSSAPGS) show a composition bias toward low complexity. Residues Lys-535, Lys-587, and Lys-590 each participate in a glycyl lysine isopeptide (Lys-Gly) (interchain with G-Cter in SUMO2) cross-link. The C2H2-type 1 zinc-finger motif lies at 606-628 (YACKICCKTFLTLTDCKKHIRVH). The C2H2-type 2; atypical zinc-finger motif lies at 634–657 (YACLKCGKRFSQSSHLYKHSKTTC). Glycyl lysine isopeptide (Lys-Gly) (interchain with G-Cter in SUMO2) cross-links involve residues Lys-638 and Lys-651.

It is found in the nucleus. Functionally, may be involved in transcriptional regulation. This is Zinc finger and BTB domain-containing protein 5 (Zbtb5) from Mus musculus (Mouse).